We begin with the raw amino-acid sequence, 297 residues long: Acetyl-coenzyme A carboxylase carboxyl transferase subunit beta (297 aa).

The region spanning 27–296 is the CoA carboxyltransferase N-terminal domain; sequence LWHKCPSCEA…PEAAKEVAAV (270 aa). Residues C31, C34, C50, and C53 each coordinate Zn(2+). The C4-type zinc-finger motif lies at 31–53; it reads CPSCEAVLYRPELEKTLDVCPKC.

It belongs to the AccD/PCCB family. As to quaternary structure, acetyl-CoA carboxylase is a heterohexamer composed of biotin carboxyl carrier protein (AccB), biotin carboxylase (AccC) and two subunits each of ACCase subunit alpha (AccA) and ACCase subunit beta (AccD). Zn(2+) serves as cofactor.

The protein resides in the cytoplasm. The enzyme catalyses N(6)-carboxybiotinyl-L-lysyl-[protein] + acetyl-CoA = N(6)-biotinyl-L-lysyl-[protein] + malonyl-CoA. It participates in lipid metabolism; malonyl-CoA biosynthesis; malonyl-CoA from acetyl-CoA: step 1/1. Functionally, component of the acetyl coenzyme A carboxylase (ACC) complex. Biotin carboxylase (BC) catalyzes the carboxylation of biotin on its carrier protein (BCCP) and then the CO(2) group is transferred by the transcarboxylase to acetyl-CoA to form malonyl-CoA. The protein is Acetyl-coenzyme A carboxylase carboxyl transferase subunit beta of Pseudomonas entomophila (strain L48).